Consider the following 388-residue polypeptide: Succinyl-diaminopimelate desuccinylase (388 aa).

Position 72 (histidine 72) interacts with Zn(2+). The active site involves aspartate 74. Aspartate 105 provides a ligand contact to Zn(2+). Glutamate 139 functions as the Proton acceptor in the catalytic mechanism. Residues glutamate 140, glutamate 168, and histidine 353 each coordinate Zn(2+).

The protein belongs to the peptidase M20A family. DapE subfamily. As to quaternary structure, homodimer. Zn(2+) serves as cofactor. Co(2+) is required as a cofactor.

It carries out the reaction N-succinyl-(2S,6S)-2,6-diaminopimelate + H2O = (2S,6S)-2,6-diaminopimelate + succinate. It participates in amino-acid biosynthesis; L-lysine biosynthesis via DAP pathway; LL-2,6-diaminopimelate from (S)-tetrahydrodipicolinate (succinylase route): step 3/3. Its function is as follows. Catalyzes the hydrolysis of N-succinyl-L,L-diaminopimelic acid (SDAP), forming succinate and LL-2,6-diaminopimelate (DAP), an intermediate involved in the bacterial biosynthesis of lysine and meso-diaminopimelic acid, an essential component of bacterial cell walls. The polypeptide is Succinyl-diaminopimelate desuccinylase (Orientia tsutsugamushi (strain Boryong) (Rickettsia tsutsugamushi)).